The primary structure comprises 635 residues: Sodium- and chloride-dependent creatine transporter 1 (635 aa).

The disordered stretch occupies residues 1–28 (MAKKSAENGIYSVSGDEKKGPLIAPGPD). The Cytoplasmic portion of the chain corresponds to 1 to 60 (MAKKSAENGIYSVSGDEKKGPLIAPGPDGAPAKGDGPVGLGTPGGRLAVPPRETWTRQMD). Thr42 is subject to Phosphothreonine. A helical transmembrane segment spans residues 61-81 (FIMSCVGFAVGLGNVWRFPYL). Topologically, residues 82 to 87 (CYKNGG) are extracellular. Residues 88–108 (GVFLIPYVLIALVGGIPIFFL) traverse the membrane as a helical segment. The Cytoplasmic portion of the chain corresponds to 109-138 (EISLGQFMKAGSINVWNICPLFKGLGYASM). The helical transmembrane segment at 139 to 159 (VIVFYCNTYYIMVLAWGFYYL) threads the bilayer. At 160 to 230 (VKSFTTTLPW…LSGGLEVPGA (71 aa)) the chain is on the extracellular side. 2 N-linked (GlcNAc...) asparagine glycosylation sites follow: Asn192 and Asn197. Residues 231–251 (LNWEVTLCLLACWVLVYFCVW) form a helical membrane-spanning segment. At 252–269 (KGVKSTGKIVYFTATFPY) the chain is on the cytoplasmic side. Residues 270–290 (VVLVVLLVRGVLLPGALDGII) traverse the membrane as a helical segment. The Extracellular portion of the chain corresponds to 291-304 (YYLKPDWSKLGSPQ). Residues 305–325 (VWIDAGTQIFFSYAIGLGALT) form a helical membrane-spanning segment. Residues 326 to 341 (ALGSYNRFNNNCYKDA) are Cytoplasmic-facing. The helical transmembrane segment at 342–362 (IILALINSGTSFFAGFVVFSI) threads the bilayer. At 363 to 394 (LGFMAAEQGVHISKVAESGPGLAFIAYPRAVT) the chain is on the extracellular side. The helical transmembrane segment at 395–415 (LMPVAPLWAALFFFMLLLLGL) threads the bilayer. The Cytoplasmic segment spans residues 416 to 444 (DSQFVGVEGFITGLLDLLPASYYFRFQRE). Residues 445–465 (ISVALCCALCFVIDLSMVTDG) form a helical membrane-spanning segment. The Extracellular segment spans residues 466 to 479 (GMYVFQLFDYYSAS). Residues 480–500 (GTTLLWQAFWECVVVAWVYGA) form a helical membrane-spanning segment. Residues 501 to 520 (DRFMDDIACMIGYRPCPWMK) lie on the Cytoplasmic side of the membrane. Residues 521–541 (WCWSFFTPLVCMGIFIFNVVY) traverse the membrane as a helical segment. Residues 542 to 560 (YEPLVYNNTYVYPWWGEAM) lie on the Extracellular side of the membrane. An N-linked (GlcNAc...) asparagine glycan is attached at Asn548. The helical transmembrane segment at 561–581 (GWAFALSSMLCVPLHLLGCLL) threads the bilayer. Topologically, residues 582 to 635 (RAKGTMAERWQHLTQPIWGLHHLEYRAQDADVRGLTTLTPVSESSKVVVVESVM) are cytoplasmic. Thr617 and Thr620 each carry phosphothreonine. A Phosphoserine modification is found at Ser623.

Belongs to the sodium:neurotransmitter symporter (SNF) (TC 2.A.22) family. SLC6A8 subfamily. In terms of processing, glycosylated. Predominantly expressed in skeletal muscle and kidney. Also found in brain, heart, colon, testis and prostate.

Its subcellular location is the cell membrane. It localises to the apical cell membrane. The catalysed reaction is creatine(out) + chloride(out) + 2 Na(+)(out) = creatine(in) + chloride(in) + 2 Na(+)(in). In terms of biological role, creatine:sodium symporter which mediates the uptake of creatine. Plays an important role in supplying creatine to the brain via the blood-brain barrier. The chain is Sodium- and chloride-dependent creatine transporter 1 (SLC6A8) from Homo sapiens (Human).